Reading from the N-terminus, the 423-residue chain is Adenylosuccinate synthetase (423 aa).

Residues 12–18 (GDEGKGK) and 40–42 (GHT) each bind GTP. The active-site Proton acceptor is the D13. Mg(2+) contacts are provided by D13 and G40. IMP contacts are provided by residues 13–16 (DEGK), 38–41 (NAGH), T129, R143, Q221, T236, and R300. The Proton donor role is filled by H41. 296–302 (AVTGRER) is a substrate binding site. Residues R302, 328 to 330 (KSD), and 408 to 410 (SVG) each bind GTP.

Belongs to the adenylosuccinate synthetase family. Homodimer. Requires Mg(2+) as cofactor.

The protein localises to the cytoplasm. The catalysed reaction is IMP + L-aspartate + GTP = N(6)-(1,2-dicarboxyethyl)-AMP + GDP + phosphate + 2 H(+). It functions in the pathway purine metabolism; AMP biosynthesis via de novo pathway; AMP from IMP: step 1/2. Plays an important role in the de novo pathway of purine nucleotide biosynthesis. Catalyzes the first committed step in the biosynthesis of AMP from IMP. The polypeptide is Adenylosuccinate synthetase (Phocaeicola vulgatus (strain ATCC 8482 / DSM 1447 / JCM 5826 / CCUG 4940 / NBRC 14291 / NCTC 11154) (Bacteroides vulgatus)).